The sequence spans 511 residues: Maturase K (511 aa).

Belongs to the intron maturase 2 family. MatK subfamily.

Its subcellular location is the plastid. It localises to the chloroplast. Functionally, usually encoded in the trnK tRNA gene intron. Probably assists in splicing its own and other chloroplast group II introns. This Bromelia plumieri (Karatas) protein is Maturase K.